The sequence spans 445 residues: 3-phosphoshikimate 1-carboxyvinyltransferase (445 aa).

3 residues coordinate 3-phosphoshikimate: Lys28, Ser29, and Arg33. Position 28 (Lys28) interacts with phosphoenolpyruvate. Gly101 and Arg129 together coordinate phosphoenolpyruvate. 3-phosphoshikimate-binding residues include Ser175, Gln177, Asp328, and Lys355. Phosphoenolpyruvate is bound at residue Gln177. The Proton acceptor role is filled by Asp328. Phosphoenolpyruvate-binding residues include Arg359 and Arg402.

Belongs to the EPSP synthase family. As to quaternary structure, monomer.

The protein resides in the cytoplasm. It carries out the reaction 3-phosphoshikimate + phosphoenolpyruvate = 5-O-(1-carboxyvinyl)-3-phosphoshikimate + phosphate. Its pathway is metabolic intermediate biosynthesis; chorismate biosynthesis; chorismate from D-erythrose 4-phosphate and phosphoenolpyruvate: step 6/7. Functionally, catalyzes the transfer of the enolpyruvyl moiety of phosphoenolpyruvate (PEP) to the 5-hydroxyl of shikimate-3-phosphate (S3P) to produce enolpyruvyl shikimate-3-phosphate and inorganic phosphate. This Bradyrhizobium sp. (strain BTAi1 / ATCC BAA-1182) protein is 3-phosphoshikimate 1-carboxyvinyltransferase.